A 97-amino-acid chain; its full sequence is Small ribosomal subunit protein bS6 (97 aa).

This sequence belongs to the bacterial ribosomal protein bS6 family.

Binds together with bS18 to 16S ribosomal RNA. The chain is Small ribosomal subunit protein bS6 from Lactococcus lactis subsp. cremoris (strain MG1363).